A 254-amino-acid chain; its full sequence is Ribosomal protein L11 methyltransferase (254 aa).

T107, G128, D149, S175, and N191 together coordinate S-adenosyl-L-methionine.

This sequence belongs to the methyltransferase superfamily. PrmA family.

Its subcellular location is the cytoplasm. It catalyses the reaction L-lysyl-[protein] + 3 S-adenosyl-L-methionine = N(6),N(6),N(6)-trimethyl-L-lysyl-[protein] + 3 S-adenosyl-L-homocysteine + 3 H(+). It carries out the reaction an N-terminal L-alpha-aminoacyl-[protein] + 3 S-adenosyl-L-methionine = an N-terminal trimethyl-L-alpha-aminoacyl-[protein] + 3 S-adenosyl-L-homocysteine + 3 H(+). Methylates ribosomal protein L11. Preferentially recognizes free L11 before its incorporation into 50S subunits. This function is dispensable for growth and thermostability. This is Ribosomal protein L11 methyltransferase from Thermus thermophilus (strain ATCC 27634 / DSM 579 / HB8).